Consider the following 291-residue polypeptide: 4-hydroxy-tetrahydrodipicolinate synthase (291 aa).

Thr44 serves as a coordination point for pyruvate. The active-site Proton donor/acceptor is the Tyr132. The active-site Schiff-base intermediate with substrate is the Lys160. Ile202 is a binding site for pyruvate.

Belongs to the DapA family. As to quaternary structure, homotetramer; dimer of dimers.

It is found in the cytoplasm. It carries out the reaction L-aspartate 4-semialdehyde + pyruvate = (2S,4S)-4-hydroxy-2,3,4,5-tetrahydrodipicolinate + H2O + H(+). It functions in the pathway amino-acid biosynthesis; L-lysine biosynthesis via DAP pathway; (S)-tetrahydrodipicolinate from L-aspartate: step 3/4. Catalyzes the condensation of (S)-aspartate-beta-semialdehyde [(S)-ASA] and pyruvate to 4-hydroxy-tetrahydrodipicolinate (HTPA). In Rhodospirillum centenum (strain ATCC 51521 / SW), this protein is 4-hydroxy-tetrahydrodipicolinate synthase.